The following is a 546-amino-acid chain: Chaperonin GroEL (546 aa).

ATP is bound by residues 29–32 (TMGP), Lys-50, 86–90 (DGTTT), Gly-414, and Asp-492.

The protein belongs to the chaperonin (HSP60) family. Forms a cylinder of 14 subunits composed of two heptameric rings stacked back-to-back. Interacts with the co-chaperonin GroES.

It localises to the cytoplasm. It catalyses the reaction ATP + H2O + a folded polypeptide = ADP + phosphate + an unfolded polypeptide.. Functionally, together with its co-chaperonin GroES, plays an essential role in assisting protein folding. The GroEL-GroES system forms a nano-cage that allows encapsulation of the non-native substrate proteins and provides a physical environment optimized to promote and accelerate protein folding. The protein is Chaperonin GroEL of Helicobacter pylori (strain ATCC 700392 / 26695) (Campylobacter pylori).